The primary structure comprises 367 residues: Gibberellin 20 oxidase 3 (367 aa).

Residues Asp198–Pro304 enclose the Fe2OG dioxygenase domain. Residue Tyr208 coordinates 2-oxoglutarate. Residues His223, Asp225, and His285 each contribute to the Fe cation site. Residues Arg295 and Ser297 each contribute to the 2-oxoglutarate site.

It belongs to the iron/ascorbate-dependent oxidoreductase family. Requires Fe(2+) as cofactor. L-ascorbate is required as a cofactor.

It carries out the reaction gibberellin A12 + 2 2-oxoglutarate + 3 O2 + H(+) = gibberellin A9 + 2 succinate + 3 CO2 + 2 H2O. The catalysed reaction is gibberellin A53 + 2 2-oxoglutarate + 3 O2 + H(+) = gibberellin A20 + 2 succinate + 3 CO2 + 2 H2O. In terms of biological role, key oxidase enzyme in the biosynthesis of gibberellin. Catalyzes the formation of bioactive gibberellins (GAs) via a three-step oxidation at C-20 of the GA skeleton. Controls the elongation of the vegetative shoot and plant height by the regulation of active gibberellin levels. In Oryza sativa subsp. japonica (Rice), this protein is Gibberellin 20 oxidase 3.